Here is a 156-residue protein sequence, read N- to C-terminus: Small ribosomal subunit protein uS7 (156 aa).

Belongs to the universal ribosomal protein uS7 family. In terms of assembly, part of the 30S ribosomal subunit. Contacts proteins S9 and S11.

Functionally, one of the primary rRNA binding proteins, it binds directly to 16S rRNA where it nucleates assembly of the head domain of the 30S subunit. Is located at the subunit interface close to the decoding center, probably blocks exit of the E-site tRNA. The chain is Small ribosomal subunit protein uS7 from Hahella chejuensis (strain KCTC 2396).